Consider the following 401-residue polypeptide: Acetate kinase (401 aa).

Residue Asn7 participates in Mg(2+) binding. Residue Lys14 participates in ATP binding. Residue Arg96 participates in substrate binding. Catalysis depends on Asp153, which acts as the Proton donor/acceptor. ATP is bound by residues 212 to 216 (HLGNG), 287 to 289 (DMR), and 335 to 339 (GIGEN). Glu388 contributes to the Mg(2+) binding site.

It belongs to the acetokinase family. Homodimer. The cofactor is Mg(2+). Mn(2+) serves as cofactor.

Its subcellular location is the cytoplasm. The catalysed reaction is acetate + ATP = acetyl phosphate + ADP. It participates in metabolic intermediate biosynthesis; acetyl-CoA biosynthesis; acetyl-CoA from acetate: step 1/2. Catalyzes the formation of acetyl phosphate from acetate and ATP. Can also catalyze the reverse reaction. The chain is Acetate kinase from Microcystis aeruginosa (strain NIES-843 / IAM M-2473).